A 328-amino-acid chain; its full sequence is DNA-directed RNA polymerase subunit alpha (328 aa).

Positions 1–233 (MHNSATEFLK…EQLEAFIDLR (233 aa)) are alpha N-terminal domain (alpha-NTD). Residues 247 to 328 (FDPVLLRPVD…WPPVSILKND (82 aa)) are alpha C-terminal domain (alpha-CTD).

The protein belongs to the RNA polymerase alpha chain family. In terms of assembly, homodimer. The RNAP catalytic core consists of 2 alpha, 1 beta, 1 beta' and 1 omega subunit. When a sigma factor is associated with the core the holoenzyme is formed, which can initiate transcription.

The catalysed reaction is RNA(n) + a ribonucleoside 5'-triphosphate = RNA(n+1) + diphosphate. In terms of biological role, DNA-dependent RNA polymerase catalyzes the transcription of DNA into RNA using the four ribonucleoside triphosphates as substrates. The protein is DNA-directed RNA polymerase subunit alpha of Wigglesworthia glossinidia brevipalpis.